The primary structure comprises 259 residues: uncharacterized protein (259 aa).

An ABC transporter domain is found at 4–248 (LQTTNLSKTY…SILDTLSVLG (245 aa)). ATP is bound at residue 42–49 (GPSGSGKT).

It belongs to the ABC transporter superfamily.

This is an uncharacterized protein from Bacillus subtilis (strain 168).